The following is a 170-amino-acid chain: Class I hydrophobin E (170 aa).

The signal sequence occupies residues 1–19 (MQLTTLLTGLISVLSVTTA). Intrachain disulfides connect Cys-62–Cys-126, Cys-70–Cys-117, Cys-71–Cys-105, and Cys-127–Cys-139.

Belongs to the fungal hydrophobin family.

Its subcellular location is the secreted. It localises to the cell wall. Aerial growth, conidiation, and dispersal of filamentous fungi in the environment rely upon a capability of their secreting small amphipathic proteins called hydrophobins (HPBs) with low sequence identity. Class I can self-assemble into an outermost layer of rodlet bundles on aerial cell surfaces, conferring cellular hydrophobicity that supports fungal growth, development and dispersal; whereas Class II form highly ordered films at water-air interfaces through intermolecular interactions but contribute nothing to the rodlet structure. In P.expansum, hydrophobins contribute to germination, tolerance to cold stress and mycotoxins patulin and citrinin production. The protein is Class I hydrophobin E of Penicillium expansum (Blue mold rot fungus).